The sequence spans 455 residues: Serine incorporator 2 (455 aa).

Helical transmembrane passes span 5–27, 40–57, 96–118, 131–150, 160–182, 202–224, 239–256, 268–290, 317–339, 385–407, and 422–444; these read LGACSLLSCASCLCGSAPCILCS, LIFTFFLFLGVLVSIIML, AVYRMCFATAAFFFFFTLLMLCV, GFWFFKFLILVGLTVGAFYI, FYFGVVGSFLFILIQLVLLIDFA, YAGLFFFTLLFYLLSIAAVALMF, FISLNLTFCVCVSIAAVL, LLQASVITLYTMFVTWSALSSIP, QWWDAPSIVGLIIFLLCTLFISL, TYSYSFFHFCLVLASLHVMMTLT, and WTAVWVKICASWAGLLLYLWTLV.

It belongs to the TDE1 family.

The protein localises to the cell membrane. The enzyme catalyses a 1,2-diacyl-sn-glycero-3-phospho-L-serine(in) = a 1,2-diacyl-sn-glycero-3-phospho-L-serine(out). It carries out the reaction a 1,2-diacyl-sn-glycero-3-phosphocholine(in) = a 1,2-diacyl-sn-glycero-3-phosphocholine(out). It catalyses the reaction a 1,2-diacyl-sn-glycero-3-phosphoethanolamine(in) = a 1,2-diacyl-sn-glycero-3-phosphoethanolamine(out). Its function is as follows. Non-ATP-dependent, non-specific lipid transporter for phosphatidylserine, phosphatidylcholine, and phosphatidylethanolamine. Functions as a scramblase that flips lipids in both directions across the membrane. In contrast to SERINC3 and SERINC5, has no effect on HIV-1 particles infectivity. The protein is Serine incorporator 2 of Homo sapiens (Human).